An 810-amino-acid chain; its full sequence is Oligoxyloglucan-reducing end-specific xyloglucanase (810 aa).

The first 28 residues, 1 to 28 (MRAKNGPGSWLALTAIATSLNTLALAAA), serve as a signal peptide directing secretion. N32 carries an N-linked (GlcNAc...) asparagine glycan. D66 functions as the Nucleophile in the catalytic mechanism. The BNR 1 repeat unit spans residues 126–135 (FVSQDRGATF). N188 carries an N-linked (GlcNAc...) asparagine glycan. The stretch at 226 to 236 (YVTRDSGESWE) is one BNR 2 repeat. N298, N312, and N321 each carry an N-linked (GlcNAc...) asparagine glycan. The stretch at 359 to 369 (YLSHDGGKSWK) is one BNR 3 repeat. N-linked (GlcNAc...) asparagine glycosylation is present at N455. D498 functions as the Proton donor in the catalytic mechanism. N-linked (GlcNAc...) asparagine glycosylation occurs at N544. A BNR 4 repeat occupies 554–564 (YSADGGSSWTK). Residues N573 and N612 are each glycosylated (N-linked (GlcNAc...) asparagine). The stretch at 617 to 626 (YVTTDLGQTW) is one BNR 5 repeat. N638 is a glycosylation site (N-linked (GlcNAc...) asparagine). 3 BNR repeats span residues 658-667 (YLSRDGGLSY), 705-716 (YHTRNFGKKWTK), and 759-769 (YRSDDNGKTWV).

It belongs to the glycosyl hydrolase 74 family.

Its subcellular location is the secreted. The enzyme catalyses Hydrolysis of cellobiose from the reducing end of xyloglucans consisting of a beta-(1-&gt;4)-linked glucan carrying alpha-D-xylosyl groups on O-6 of the glucose residues. To be a substrate, the first residue must be unsubstituted, the second residue may bear a xylosyl group, whether further glycosylated or not, and the third residue, which becomes the new terminus by the action of the enzyme, is preferably xylosylated, but this xylose residue must not be further substituted.. Its function is as follows. Oligoxyloglucan-reducing end-specific xyloglucanase involved in degradation of xyloglucans. Releases the first two glycosyl segments from oligoxyloglucans. Active against cotton xyloglucan, tamarind xyloglucan and tamarind xyloglucan oligomers. This Emericella nidulans (strain FGSC A4 / ATCC 38163 / CBS 112.46 / NRRL 194 / M139) (Aspergillus nidulans) protein is Oligoxyloglucan-reducing end-specific xyloglucanase (xgcA).